The following is a 273-amino-acid chain: Undecaprenyl-diphosphatase (273 aa).

A run of 9 helical transmembrane segments spans residues 1–21, 39–59, 63–83, 92–112, 118–138, 165–185, 195–215, 225–245, and 252–272; these read MEPI…FLPV, PALF…LIVF, LGMM…GIAP, LKLA…GLGL, LFFS…LLWL, GLAV…GLFL, FSFL…AVDL, ATVL…KVLI, and RFYL…WIGM.

This sequence belongs to the UppP family.

It is found in the cell inner membrane. The catalysed reaction is di-trans,octa-cis-undecaprenyl diphosphate + H2O = di-trans,octa-cis-undecaprenyl phosphate + phosphate + H(+). In terms of biological role, catalyzes the dephosphorylation of undecaprenyl diphosphate (UPP). Confers resistance to bacitracin. This is Undecaprenyl-diphosphatase from Desulfosudis oleivorans (strain DSM 6200 / JCM 39069 / Hxd3) (Desulfococcus oleovorans).